Here is a 510-residue protein sequence, read N- to C-terminus: Serine/threonine protein phosphatase 2A 59 kDa regulatory subunit B' eta isoform (510 aa).

The interval 1–87 (MWKQILSKLP…NNNNNNNNGV (87 aa)) is disordered. Residues 10–19 (PNKKSSKHEH) are compositionally biased toward basic residues. A compositionally biased stretch (low complexity) spans 27 to 42 (HSSSSSHTSGASTSKS).

Belongs to the phosphatase 2A regulatory subunit B56 family. As to quaternary structure, PP2A consists of a common heteromeric enzyme, composed of a catalytic subunit (subunits C), a constant regulatory subunit (subunit A), and a variety of regulatory subunits such as subunits B (the R2/B/PR55/B55, R3/B''/PR72/PR130/PR59 and R5/B'/B56 families). Interacts with BZR1. Interacts with BRI1.

The protein resides in the nucleus. The protein localises to the nucleolus. It localises to the cytoplasm. The B regulatory subunit may modulate substrate selectivity and catalytic activity, and may also direct the localization of the catalytic enzyme to a particular subcellular compartment. The holoenzyme composed of PP2AA1, PP2A4 and B'ETA acts as negative regulator of plant innate immunity by controlling BAK1 phosphorylation state and activation in surface-localized immune receptor complexes. Required for the formation of the PP2A holoenzyme that negatively regulates brassinosteroid signaling by dephosphorylating and inactivating BRI1 in the cytoplasm. In Arabidopsis thaliana (Mouse-ear cress), this protein is Serine/threonine protein phosphatase 2A 59 kDa regulatory subunit B' eta isoform (B'ETA).